We begin with the raw amino-acid sequence, 503 residues long: MELLPPRGRAPPDSSLDSASLTSLDSSVFCSEGEGEPLALGDSFTVNVGGSRFVLSQQALSCFPHTRLGKLAVVVASCRRRGALAAVPSPLELCDDANPVDNEYFFDRSSQAFRYVLHYYRTGRLHVMEQLCALSFLQEIQYWGIDELSIDSCCRDRYFRRKELSETLDFKKDTEDQESQHESEQDFSQGRCPTIRQKLWNILEKPGSCTAARIFGVISIIFVAVSIVNMALMSAELSWLDPQLLEILEYVCISWFTGEFVLRFLCVRDRCRFLRKVPNIIDLLAILPFYITLLVESLSGSQTTQELENVGRIVQVLRLLRALRMLKLGRHSTGLRSLGMTITQCYEEVGLLLLFLSVGISIFSTVEYFAEQSIPDTTFTSVPCAWWWATTSMTTVGYGDIRPDTTTGKIVAFMCILSGILVLALPIAIINDRFSACYFTLKLKEAAVRQREALKKLTKNIATDSYISVNLRDVYARSIMEMLRLKGRERASTRSSGGDDFWF.

The Cytoplasmic segment spans residues 1 to 213 (MELLPPRGRA…EKPGSCTAAR (213 aa)). A helical membrane pass occupies residues 214 to 234 (IFGVISIIFVAVSIVNMALMS). Topologically, residues 235-246 (AELSWLDPQLLE) are extracellular. The helical transmembrane segment at 247–267 (ILEYVCISWFTGEFVLRFLCV) threads the bilayer. The Cytoplasmic segment spans residues 268–279 (RDRCRFLRKVPN). The chain crosses the membrane as a helical span at residues 280–300 (IIDLLAILPFYITLLVESLSG). The Extracellular portion of the chain corresponds to 301–312 (SQTTQELENVGR). A helical; Voltage-sensor transmembrane segment spans residues 313-334 (IVQVLRLLRALRMLKLGRHSTG). The Cytoplasmic portion of the chain corresponds to 335-348 (LRSLGMTITQCYEE). Residues 349 to 369 (VGLLLLFLSVGISIFSTVEYF) form a helical membrane-spanning segment. Positions 395-400 (TVGYGD) match the Selectivity filter motif. The chain crosses the membrane as a helical span at residues 410 to 430 (IVAFMCILSGILVLALPIAII). At 431–503 (NDRFSACYFT…RSSGGDDFWF (73 aa)) the chain is on the cytoplasmic side.

Belongs to the potassium channel family. V (TC 1.A.1.2) subfamily. Kv8.1/KCNV1 sub-subfamily. As to quaternary structure, heteromultimer with KCNB1 and KCNB2. Interacts with KCNC4 and KCND1.

The protein localises to the cell membrane. In terms of biological role, potassium channel subunit that does not form functional channels by itself. Modulates KCNB1 and KCNB2 channel activity by shifting the threshold for inactivation to more negative values and by slowing the rate of inactivation. Can down-regulate the channel activity of KCNB1, KCNB2, KCNC4 and KCND1, possibly by trapping them in intracellular membranes. This is Potassium voltage-gated channel subfamily V member 1 (KCNV1) from Bos taurus (Bovine).